The primary structure comprises 196 residues: Kunitz trypsin inhibitor 5 (196 aa).

An N-terminal signal peptide occupies residues 1–19 (MSSLLYIFLLLAVFISHRG). A disulfide bridge links cysteine 156 with cysteine 167.

Belongs to the protease inhibitor I3 (leguminous Kunitz-type inhibitor) family.

Its subcellular location is the endoplasmic reticulum. In terms of biological role, can inhibit both serine proteases and cysteine proteases. May be involved in the modulation of the proteases that participate in the hydrolysis of dietary proteins in the gut of spider mites. This is Kunitz trypsin inhibitor 5 from Arabidopsis thaliana (Mouse-ear cress).